Consider the following 762-residue polypeptide: Poly(A) RNA polymerase CID14 (762 aa).

The interval M1–R123 is disordered. Over residues K50 to K62 the composition is skewed to basic residues. Basic and acidic residues-rich tracts occupy residues Q65–G75 and R99–R123. S189 serves as a coordination point for ATP. Mg(2+) contacts are provided by D200 and D202. ATP contacts are provided by G266, K291, S309, and Y310. The 58-residue stretch at N336–N393 folds into the PAP-associated domain. The segment at S482–D762 is disordered. Over residues V536–S549 the composition is skewed to acidic residues. The segment covering R572–R581 has biased composition (polar residues). ATP is bound at residue K610. Acidic residues-rich tracts occupy residues G677 to E687 and S697 to I707. A compositionally biased stretch (polar residues) spans L753–D762.

It belongs to the DNA polymerase type-B-like family. In terms of assembly, component of the TRAMP complex. Mg(2+) is required as a cofactor. The cofactor is Mn(2+).

The protein localises to the nucleus. The protein resides in the nucleolus. The enzyme catalyses RNA(n) + ATP = RNA(n)-3'-adenine ribonucleotide + diphosphate. Functionally, required for 3' polyadenylation of the 5.8S and 25S rRNAs as a prelude to their degradation in the exosome. Involved in the nucleolar organization to ensure faithful chromosome segregation during mitosis. The protein is Poly(A) RNA polymerase CID14 of Cryptococcus neoformans var. neoformans serotype D (strain JEC21 / ATCC MYA-565) (Filobasidiella neoformans).